A 272-amino-acid polypeptide reads, in one-letter code: uncharacterized protein (272 aa).

In terms of domain architecture, AB hydrolase-1 spans 20 to 133 (PVLIFIPGAN…PPINTFLPDS (114 aa)).

The protein belongs to the AB hydrolase superfamily.

This is an uncharacterized protein from Staphylococcus aureus (strain MSSA476).